The sequence spans 221 residues: Orotate phosphoribosyltransferase (221 aa).

Lys27 is a binding site for 5-phospho-alpha-D-ribose 1-diphosphate. Residue 35-36 coordinates orotate; sequence FF. 5-phospho-alpha-D-ribose 1-diphosphate contacts are provided by residues 75 to 76, Arg102, Lys103, Lys106, His108, and 128 to 136; these read YK and DDVLTAGTA. 2 residues coordinate orotate: Thr132 and Arg160.

This sequence belongs to the purine/pyrimidine phosphoribosyltransferase family. PyrE subfamily. In terms of assembly, homodimer. Mg(2+) is required as a cofactor.

It carries out the reaction orotidine 5'-phosphate + diphosphate = orotate + 5-phospho-alpha-D-ribose 1-diphosphate. The protein operates within pyrimidine metabolism; UMP biosynthesis via de novo pathway; UMP from orotate: step 1/2. Its function is as follows. Catalyzes the transfer of a ribosyl phosphate group from 5-phosphoribose 1-diphosphate to orotate, leading to the formation of orotidine monophosphate (OMP). The chain is Orotate phosphoribosyltransferase from Dichelobacter nodosus (strain VCS1703A).